The sequence spans 491 residues: Chromosomal replication initiator protein DnaA (491 aa).

Positions 1–69 are domain I, interacts with DnaA modulators; sequence MTTWDKCLKK…TIQECHGNDL (69 aa). The domain II stretch occupies residues 69-154; that stretch reads LIIEYSNKKF…KEDEEYSFGL (86 aa). The domain III, AAA+ region stretch occupies residues 155–371; sequence PLKEKYVFDS…GALNRVLTTS (217 aa). ATP contacts are provided by glycine 199, glycine 201, lysine 202, and threonine 203. The tract at residues 372 to 491 is domain IV, binds dsDNA; it reads KFNHKDPTIE…YELLLDKISR (120 aa).

The protein belongs to the DnaA family. In terms of assembly, oligomerizes as a right-handed, spiral filament on DNA at oriC.

Its subcellular location is the cytoplasm. Plays an essential role in the initiation and regulation of chromosomal replication. ATP-DnaA binds to the origin of replication (oriC) to initiate formation of the DNA replication initiation complex once per cell cycle. Binds the DnaA box (a 9 base pair repeat at the origin) and separates the double-stranded (ds)DNA. Forms a right-handed helical filament on oriC DNA; dsDNA binds to the exterior of the filament while single-stranded (ss)DNA is stabiized in the filament's interior. The ATP-DnaA-oriC complex binds and stabilizes one strand of the AT-rich DNA unwinding element (DUE), permitting loading of DNA polymerase. After initiation quickly degrades to an ADP-DnaA complex that is not apt for DNA replication. Binds acidic phospholipids. This is Chromosomal replication initiator protein DnaA from Francisella tularensis subsp. holarctica (strain OSU18).